The primary structure comprises 335 residues: Cell division protein ZipA (335 aa).

The Periplasmic portion of the chain corresponds to 1–4; sequence MDLN. Residues 5 to 25 form a helical membrane-spanning segment; the sequence is AILIILGVIALIILVAHGIWS. Over 26–335 the chain is Cytoplasmic; the sequence is NRCEKSQYFE…AERDYLARVS (310 aa).

This sequence belongs to the ZipA family. In terms of assembly, interacts with FtsZ via their C-terminal domains.

The protein resides in the cell inner membrane. Its function is as follows. Essential cell division protein that stabilizes the FtsZ protofilaments by cross-linking them and that serves as a cytoplasmic membrane anchor for the Z ring. Also required for the recruitment to the septal ring of downstream cell division proteins. In Histophilus somni (strain 129Pt) (Haemophilus somnus), this protein is Cell division protein ZipA.